The following is a 177-amino-acid chain: Keratin-associated protein 1-1 (177 aa).

This sequence belongs to the KRTAP type 1 family. As to quaternary structure, interacts with hair keratins. As to expression, expressed in the middle/upper portions of the hair cortex, in the region termed the keratogenous zone.

Its function is as follows. In the hair cortex, hair keratin intermediate filaments are embedded in an interfilamentous matrix, consisting of hair keratin-associated proteins (KRTAP), which are essential for the formation of a rigid and resistant hair shaft through their extensive disulfide bond cross-linking with abundant cysteine residues of hair keratins. The matrix proteins include the high-sulfur and high-glycine-tyrosine keratins. The protein is Keratin-associated protein 1-1 (KRTAP1-1) of Homo sapiens (Human).